Reading from the N-terminus, the 276-residue chain is Syntaxin-12 (276 aa).

At Ser-2 the chain carries N-acetylserine. The Cytoplasmic segment spans residues 2-248 (SYGPLDMYRN…RAAYYQKKSR (247 aa)). The stretch at 33–131 (IQRISQATAQ…RRVSEKEKES (99 aa)) forms a coiled coil. Phosphoserine is present on residues Ser-139, Ser-142, Ser-218, and Ser-225. The region spanning 178-240 (LELIKERETA…ERATEQLQRA (63 aa)) is the t-SNARE coiled-coil homology domain. A helical; Anchor for type IV membrane protein transmembrane segment spans residues 249–269 (KKMCILVLVLSVIILILGLII). The Vesicular portion of the chain corresponds to 270–276 (WLVYKTK).

This sequence belongs to the syntaxin family. As to quaternary structure, interacts with NAPA and SNAP23. Identified in a complex containing STX6, STX12, VAMP4 and VTI1A. Associates with the BLOC-1 complex. Interacts with BLOC1S6. Interacts with GRIPAP1. Forms a complex with GRIP1, GRIA2 and NSG1; controls the intracellular fate of AMPAR and the endosomal sorting of the GRIA2 subunit toward recycling and membrane targeting. Interacts with NSG1. Interacts with TPC1. Interacts (via N-terminus) with VPS13B.

The protein localises to the endosome membrane. It is found in the golgi apparatus membrane. It localises to the endomembrane system. The protein resides in the early endosome membrane. Its subcellular location is the recycling endosome membrane. SNARE promoting fusion of transport vesicles with target membranes. Together with SNARE STX6, promotes movement of vesicles from endosomes to the cell membrane, and may therefore function in the endocytic recycling pathway. Through complex formation with GRIP1, GRIA2 and NSG1 controls the intracellular fate of AMPAR and the endosomal sorting of the GRIA2 subunit toward recycling and membrane targeting. In Homo sapiens (Human), this protein is Syntaxin-12 (STX12).